Here is a 308-residue protein sequence, read N- to C-terminus: Spermidine synthase 2 (308 aa).

The 238-residue stretch at 17-254 (PGWFSEISPL…GVIGFMLCST (238 aa)) folds into the PABS domain. Gln-48 provides a ligand contact to S-adenosyl 3-(methylsulfanyl)propylamine. Tyr-78 contacts putrescine. S-adenosyl 3-(methylsulfanyl)propylamine-binding positions include Gln-79, Asp-103, Glu-123, 154–155 (DG), and Asp-173. Asp-173 (proton acceptor) is an active-site residue. Putrescine contacts are provided by residues 173-176 (DSSD) and Tyr-242.

It belongs to the spermidine/spermine synthase family.

The enzyme catalyses S-adenosyl 3-(methylsulfanyl)propylamine + putrescine = S-methyl-5'-thioadenosine + spermidine + H(+). Its pathway is amine and polyamine biosynthesis; spermidine biosynthesis; spermidine from putrescine: step 1/1. This chain is Spermidine synthase 2, found in Hyoscyamus niger (Black henbane).